Here is a 63-residue protein sequence, read N- to C-terminus: Small ribosomal subunit protein eS30B (63 aa).

Residues 1 to 35 (MAKVHGSLARAGKVKSQTPKVEKTEKPKKPKGRAY) are disordered. Residue serine 16 is modified to Phosphoserine. Phosphothreonine is present on threonine 48.

This sequence belongs to the eukaryotic ribosomal protein eS30 family. In terms of assembly, component of the small ribosomal subunit (SSU). Mature yeast ribosomes consist of a small (40S) and a large (60S) subunit. The 40S small subunit contains 1 molecule of ribosomal RNA (18S rRNA) and 33 different proteins (encoded by 57 genes). The large 60S subunit contains 3 rRNA molecules (25S, 5.8S and 5S rRNA) and 46 different proteins (encoded by 81 genes).

The protein resides in the cytoplasm. Component of the ribosome, a large ribonucleoprotein complex responsible for the synthesis of proteins in the cell. The small ribosomal subunit (SSU) binds messenger RNAs (mRNAs) and translates the encoded message by selecting cognate aminoacyl-transfer RNA (tRNA) molecules. The large subunit (LSU) contains the ribosomal catalytic site termed the peptidyl transferase center (PTC), which catalyzes the formation of peptide bonds, thereby polymerizing the amino acids delivered by tRNAs into a polypeptide chain. The nascent polypeptides leave the ribosome through a tunnel in the LSU and interact with protein factors that function in enzymatic processing, targeting, and the membrane insertion of nascent chains at the exit of the ribosomal tunnel. In Saccharomyces cerevisiae (strain ATCC 204508 / S288c) (Baker's yeast), this protein is Small ribosomal subunit protein eS30B.